Reading from the N-terminus, the 525-residue chain is GMP synthase [glutamine-hydrolyzing] (525 aa).

Residues 9-207 (RILILDFGSQ…ILDICGCEAL (199 aa)) form the Glutamine amidotransferase type-1 domain. Cysteine 86 functions as the Nucleophile in the catalytic mechanism. Catalysis depends on residues histidine 181 and glutamate 183. The 193-residue stretch at 208-400 (WTPSKIAEDA…LGLPYDMVYR (193 aa)) folds into the GMPS ATP-PPase domain. ATP is bound at residue 235–241 (SGGVDSS).

As to quaternary structure, homodimer.

The enzyme catalyses XMP + L-glutamine + ATP + H2O = GMP + L-glutamate + AMP + diphosphate + 2 H(+). It functions in the pathway purine metabolism; GMP biosynthesis; GMP from XMP (L-Gln route): step 1/1. In terms of biological role, catalyzes the synthesis of GMP from XMP. The polypeptide is GMP synthase [glutamine-hydrolyzing] (Pseudomonas syringae pv. syringae (strain B728a)).